The sequence spans 769 residues: Homoaconitase, mitochondrial (769 aa).

A mitochondrion-targeting transit peptide spans 1-28; the sequence is MQSRLLPSGPGRRWISLRVPNTPQRRAF. [4Fe-4S] cluster is bound by residues cysteine 391, cysteine 460, and cysteine 463.

Belongs to the aconitase/IPM isomerase family. [4Fe-4S] cluster serves as cofactor.

Its subcellular location is the mitochondrion. The catalysed reaction is (2R,3S)-homoisocitrate = cis-homoaconitate + H2O. It participates in amino-acid biosynthesis; L-lysine biosynthesis via AAA pathway; L-alpha-aminoadipate from 2-oxoglutarate: step 3/5. Functionally, catalyzes the reversible hydration of cis-homoaconitate to (2R,3S)-homoisocitrate, a step in the alpha-aminoadipate pathway for lysine biosynthesis. This is Homoaconitase, mitochondrial (lysA) from Aspergillus niger (strain ATCC MYA-4892 / CBS 513.88 / FGSC A1513).